A 223-amino-acid chain; its full sequence is Deoxyribose-phosphate aldolase (223 aa).

Asp89 acts as the Proton donor/acceptor in catalysis. The active-site Schiff-base intermediate with acetaldehyde is Lys152. Lys181 (proton donor/acceptor) is an active-site residue.

Belongs to the DeoC/FbaB aldolase family. DeoC type 1 subfamily.

It localises to the cytoplasm. The enzyme catalyses 2-deoxy-D-ribose 5-phosphate = D-glyceraldehyde 3-phosphate + acetaldehyde. Its pathway is carbohydrate degradation; 2-deoxy-D-ribose 1-phosphate degradation; D-glyceraldehyde 3-phosphate and acetaldehyde from 2-deoxy-alpha-D-ribose 1-phosphate: step 2/2. In terms of biological role, catalyzes a reversible aldol reaction between acetaldehyde and D-glyceraldehyde 3-phosphate to generate 2-deoxy-D-ribose 5-phosphate. The protein is Deoxyribose-phosphate aldolase of Bacillus cereus (strain ATCC 14579 / DSM 31 / CCUG 7414 / JCM 2152 / NBRC 15305 / NCIMB 9373 / NCTC 2599 / NRRL B-3711).